Reading from the N-terminus, the 325-residue chain is Tetraacyldisaccharide 4'-kinase (325 aa).

Residue 53-60 coordinates ATP; sequence SVGGNGKT.

The protein belongs to the LpxK family.

It catalyses the reaction a lipid A disaccharide + ATP = a lipid IVA + ADP + H(+). The protein operates within glycolipid biosynthesis; lipid IV(A) biosynthesis; lipid IV(A) from (3R)-3-hydroxytetradecanoyl-[acyl-carrier-protein] and UDP-N-acetyl-alpha-D-glucosamine: step 6/6. In terms of biological role, transfers the gamma-phosphate of ATP to the 4'-position of a tetraacyldisaccharide 1-phosphate intermediate (termed DS-1-P) to form tetraacyldisaccharide 1,4'-bis-phosphate (lipid IVA). The chain is Tetraacyldisaccharide 4'-kinase from Pasteurella multocida (strain Pm70).